The sequence spans 287 residues: tRNA pseudouridine synthase B (287 aa).

D38 functions as the Nucleophile in the catalytic mechanism.

It belongs to the pseudouridine synthase TruB family. Type 1 subfamily.

It carries out the reaction uridine(55) in tRNA = pseudouridine(55) in tRNA. Functionally, responsible for synthesis of pseudouridine from uracil-55 in the psi GC loop of transfer RNAs. In Fusobacterium nucleatum subsp. nucleatum (strain ATCC 25586 / DSM 15643 / BCRC 10681 / CIP 101130 / JCM 8532 / KCTC 2640 / LMG 13131 / VPI 4355), this protein is tRNA pseudouridine synthase B.